The primary structure comprises 410 residues: Peptidase T (410 aa).

His-79 serves as a coordination point for Zn(2+). The active site involves Asp-81. Asp-142 is a binding site for Zn(2+). Glu-176 functions as the Proton acceptor in the catalytic mechanism. The Zn(2+) site is built by Glu-177, Asp-199, and His-381.

It belongs to the peptidase M20B family. Zn(2+) is required as a cofactor.

It localises to the cytoplasm. It carries out the reaction Release of the N-terminal residue from a tripeptide.. Its function is as follows. Cleaves the N-terminal amino acid of tripeptides. This is Peptidase T from Listeria monocytogenes serotype 4a (strain HCC23).